We begin with the raw amino-acid sequence, 307 residues long: Cytochrome c1 2, heme protein, mitochondrial (307 aa).

The transit peptide at Met-1–Ala-64 directs the protein to the mitochondrion. Over Asp-65–Met-270 the chain is Mitochondrial intermembrane. The Cytochrome c domain occupies Ala-90–Leu-197. Residues Cys-103, Cys-106, His-107, and Met-226 each coordinate heme c. Residues Gly-271–Tyr-288 traverse the membrane as a helical segment. Residues Arg-289–Asn-307 are Mitochondrial matrix-facing.

This sequence belongs to the cytochrome c family. In terms of assembly, component of the ubiquinol-cytochrome c oxidoreductase (cytochrome b-c1 complex, complex III, CIII), a multisubunit enzyme composed of 10 subunits. The complex is composed of 3 respiratory subunits cytochrome b (MT-CYB), cytochrome c1 (CYC1-1 or CYC1-2) and Rieske protein (UCR1-1 or UCR1-2), 2 core protein subunits MPPalpha1 (or MPPalpha2) and MPPB, and 5 low-molecular weight protein subunits QCR7-1 (or QCR7-2), UCRQ-1 (or UCRQ-2), QCR9, UCRY and probably QCR6-1 (or QCR6-2). The complex exists as an obligatory dimer and forms supercomplexes (SCs) in the inner mitochondrial membrane with NADH-ubiquinone oxidoreductase (complex I, CI), resulting in different assemblies (supercomplexes SCI(1)III(2) and SCI(2)III(4)). In terms of processing, binds 1 heme c group covalently per subunit.

It localises to the mitochondrion inner membrane. Its function is as follows. Component of the ubiquinol-cytochrome c oxidoreductase, a multisubunit transmembrane complex that is part of the mitochondrial electron transport chain which drives oxidative phosphorylation. The respiratory chain contains 3 multisubunit complexes succinate dehydrogenase (complex II, CII), ubiquinol-cytochrome c oxidoreductase (cytochrome b-c1 complex, complex III, CIII) and cytochrome c oxidase (complex IV, CIV), that cooperate to transfer electrons derived from NADH and succinate to molecular oxygen, creating an electrochemical gradient over the inner membrane that drives transmembrane transport and the ATP synthase. The cytochrome b-c1 complex catalyzes electron transfer from ubiquinol to cytochrome c, linking this redox reaction to translocation of protons across the mitochondrial inner membrane, with protons being carried across the membrane as hydrogens on the quinol. In the process called Q cycle, 2 protons are consumed from the matrix, 4 protons are released into the intermembrane space and 2 electrons are passed to cytochrome c. Cytochrome c1 is a catalytic core subunit containing a c-type heme. It transfers electrons from the [2Fe-2S] iron-sulfur cluster of the Rieske protein to cytochrome c. The chain is Cytochrome c1 2, heme protein, mitochondrial (CYC1-2) from Arabidopsis thaliana (Mouse-ear cress).